We begin with the raw amino-acid sequence, 253 residues long: ATP synthase subunit b 2 (253 aa).

A helical membrane pass occupies residues 9 to 27 (VLEIVNFLVLVWLLKRFLY).

The protein belongs to the ATPase B chain family. F-type ATPases have 2 components, F(1) - the catalytic core - and F(0) - the membrane proton channel. F(1) has five subunits: alpha(3), beta(3), gamma(1), delta(1), epsilon(1). F(0) has three main subunits: a(1), b(2) and c(10-14). The alpha and beta chains form an alternating ring which encloses part of the gamma chain. F(1) is attached to F(0) by a central stalk formed by the gamma and epsilon chains, while a peripheral stalk is formed by the delta and b chains.

Its subcellular location is the cell inner membrane. In terms of biological role, f(1)F(0) ATP synthase produces ATP from ADP in the presence of a proton or sodium gradient. F-type ATPases consist of two structural domains, F(1) containing the extramembraneous catalytic core and F(0) containing the membrane proton channel, linked together by a central stalk and a peripheral stalk. During catalysis, ATP synthesis in the catalytic domain of F(1) is coupled via a rotary mechanism of the central stalk subunits to proton translocation. Component of the F(0) channel, it forms part of the peripheral stalk, linking F(1) to F(0). This chain is ATP synthase subunit b 2, found in Methylococcus capsulatus (strain ATCC 33009 / NCIMB 11132 / Bath).